The chain runs to 338 residues: RNA 3'-terminal phosphate cyclase (338 aa).

ATP contacts are provided by residues Q103 and 283–287 (YLADQ). The active-site Tele-AMP-histidine intermediate is the H308.

Belongs to the RNA 3'-terminal cyclase family. Type 1 subfamily.

Its subcellular location is the cytoplasm. It catalyses the reaction a 3'-end 3'-phospho-ribonucleotide-RNA + ATP = a 3'-end 2',3'-cyclophospho-ribonucleotide-RNA + AMP + diphosphate. Functionally, catalyzes the conversion of 3'-phosphate to a 2',3'-cyclic phosphodiester at the end of RNA. The mechanism of action of the enzyme occurs in 3 steps: (A) adenylation of the enzyme by ATP; (B) transfer of adenylate to an RNA-N3'P to produce RNA-N3'PP5'A; (C) and attack of the adjacent 2'-hydroxyl on the 3'-phosphorus in the diester linkage to produce the cyclic end product. The biological role of this enzyme is unknown but it is likely to function in some aspects of cellular RNA processing. The polypeptide is RNA 3'-terminal phosphate cyclase (Escherichia coli O6:K15:H31 (strain 536 / UPEC)).